Here is a 904-residue protein sequence, read N- to C-terminus: HTH-type transcriptional regulator MalT (904 aa).

39–46 (CPAGYGKT) contacts ATP. The HTH luxR-type domain occupies 832–897 (ELIRTSPLTQ…EAVQQAQQLL (66 aa)). The H-T-H motif DNA-binding region spans 856–875 (NDQIAGELAVAATTIKTHIR).

This sequence belongs to the MalT family. Monomer in solution. Oligomerizes to an active state in the presence of the positive effectors ATP and maltotriose.

With respect to regulation, activated by ATP and maltotriose, which are both required for DNA binding. Functionally, positively regulates the transcription of the maltose regulon whose gene products are responsible for uptake and catabolism of malto-oligosaccharides. Specifically binds to the promoter region of its target genes, recognizing a short DNA motif called the MalT box. The protein is HTH-type transcriptional regulator MalT of Serratia proteamaculans (strain 568).